Here is a 138-residue protein sequence, read N- to C-terminus: Large ribosomal subunit protein uL16 (138 aa).

It belongs to the universal ribosomal protein uL16 family. In terms of assembly, part of the 50S ribosomal subunit.

Its function is as follows. Binds 23S rRNA and is also seen to make contacts with the A and possibly P site tRNAs. In Nitrosomonas europaea (strain ATCC 19718 / CIP 103999 / KCTC 2705 / NBRC 14298), this protein is Large ribosomal subunit protein uL16.